A 201-amino-acid chain; its full sequence is 3-isopropylmalate dehydratase small subunit (201 aa).

It belongs to the LeuD family. LeuD type 1 subfamily. In terms of assembly, heterodimer of LeuC and LeuD.

It catalyses the reaction (2R,3S)-3-isopropylmalate = (2S)-2-isopropylmalate. It participates in amino-acid biosynthesis; L-leucine biosynthesis; L-leucine from 3-methyl-2-oxobutanoate: step 2/4. Catalyzes the isomerization between 2-isopropylmalate and 3-isopropylmalate, via the formation of 2-isopropylmaleate. The polypeptide is 3-isopropylmalate dehydratase small subunit (Shewanella sp. (strain MR-7)).